The primary structure comprises 231 residues: Ribonuclease 3 (231 aa).

Residues 8 to 135 form the RNase III domain; that stretch reads VGDLERRIGH…LMAALYQDGG (128 aa). Glutamate 48 serves as a coordination point for Mg(2+). Catalysis depends on residues aspartate 52 and glutamate 124. A Mg(2+)-binding site is contributed by glutamate 124. One can recognise a DRBM domain in the interval 161–230; that stretch reads DPKTALQEWA…AKALLEREGA (70 aa). The interval 210–231 is disordered; it reads GKSRQEAEKAAAKALLEREGAG. A compositionally biased stretch (basic and acidic residues) spans 212 to 231; the sequence is SRQEAEKAAAKALLEREGAG.

It belongs to the ribonuclease III family. Homodimer. Requires Mg(2+) as cofactor.

The protein localises to the cytoplasm. The catalysed reaction is Endonucleolytic cleavage to 5'-phosphomonoester.. Its function is as follows. Digests double-stranded RNA. Involved in the processing of primary rRNA transcript to yield the immediate precursors to the large and small rRNAs (23S and 16S). Processes some mRNAs, and tRNAs when they are encoded in the rRNA operon. Processes pre-crRNA and tracrRNA of type II CRISPR loci if present in the organism. In Caulobacter vibrioides (strain ATCC 19089 / CIP 103742 / CB 15) (Caulobacter crescentus), this protein is Ribonuclease 3.